A 349-amino-acid polypeptide reads, in one-letter code: Divinyl chlorophyll a/b light-harvesting protein PcbB (349 aa).

6 helical membrane-spanning segments follow: residues 27–47 (FIAAHAAHTGLIAFGCGAATL), 57–77 (LPMGHQSSLFLAHLASVGIGF), 91–113 (IAILHLILSMVYGGGGLLHSVYF), 201–221 (VMGGHAFLAFFQLGGGAFHIA), 241–261 (AILSWSLAGIGWMACVAAFWA), and 306–326 (LVNVHYYLGFFFIQGHLWHAL).

The protein belongs to the PsbB/PsbC family. IsiA/Pcb subfamily. As to quaternary structure, the antenna complex consists of divinyl chlorophylls (a and b) and divinyl chlorophyll a/b binding proteins and binds more divinyl chlorophyll b than does the antenna complex from high-light-adapted Prochlorococcus. Divinyl chlorophyll a is required as a cofactor. Requires divinyl chlorophyll b as cofactor.

It localises to the cellular thylakoid membrane. The antenna complex functions as a light receptor, it captures and delivers excitation energy to photosystems II and I. The Prochlorales pcb genes are not related to higher plant LHCs. In Prochlorococcus marinus (strain SARG / CCMP1375 / SS120), this protein is Divinyl chlorophyll a/b light-harvesting protein PcbB (pcbB).